We begin with the raw amino-acid sequence, 119 residues long: Ergochrome gene cluster protein CPUR_05426 (119 aa).

Its pathway is pigment biosynthesis. Part of the ergochrome gene cluster responsible for the typical purple-black color of the ergot sclerotia. The ergochrome gene cluster produces several ergot pigments including the yellow ergochrome secalonic acid and its derivatives, as well as the red anthraquinones endocrocin and clavorubin. The pathway begins with the synthesis of atrochrysone thioester by the polyketide synthase (PKS) CPUR_05437. The atrochrysone carboxyl ACP thioesterase CPUR_05436 then breaks the thioester bond and releases the atrochrysone carboxylic acid from CPUR_05437. The atrochrysone carboxylic acid is then converted to atrochrysone which is further transformed into emodin anthrone. The next step is performed by the anthrone oxygenase CPUR_05434 that catalyzes the oxidation of emodinanthrone to emodin. Emodin is further modified to yield monodictyphenone via several steps involving CPUR_05427, CPUR_05428, CPUR_05429 and CPUR_05430. The short chain dehydrogenase/reductase CPUR_05418 then catalyzes the C-5 ketoreduction to give the xanthone skeleton of the monomeric units. Ergochromes formation requires further dimerization steps of different xanthone units, probably catalyzed by the cytochrome P450 monooxygenase CPUR_05419. CPUR_05425, CPUR_05426 and CPUR_05431 are unique to Claviceps, thus it is likely that they are involved in further modification of xanthone units or in their dimerization. The yellow ergochromes and the red anthraquinone pigments endocrocin and clavorubin are products from the same PKS derived precursors and the latter are likely shunt products in the pathway of xanthone biosynthesis. It is proposed that atrochrysone carboxylic acid released from the PKS CPUR_05437 can also be converted to endocrocin anthrone which is further oxidized into endocrocin by CPUR_05435. Endocrocin could be then modified to clavorubin, possibly by CPUR_05423 and CPUR_05431. Clavorubin is the principal anthraquinone metabolite produced by the cluster with a much higher yield compared to endocrocin. The sequence is that of Ergochrome gene cluster protein CPUR_05426 from Claviceps purpurea (strain 20.1) (Ergot fungus).